Here is a 550-residue protein sequence, read N- to C-terminus: Coiled-coil domain-containing protein 102A (550 aa).

Disordered stretches follow at residues 1–69 and 138–247; these read MSHG…DGDW and GARR…ATEE. Residues Ser-12, Ser-26, and Ser-28 each carry the phosphoserine modification. The span at 37–61 shows a compositional bias: pro residues; that stretch reads SLPPTPPSGTPSPGPPPALPLPPAP. A coiled-coil region spans residues 72 to 161; the sequence is REELRLRELE…ARGRELARLR (90 aa). 2 stretches are compositionally biased toward basic and acidic residues: residues 138-159 and 169-188; these read GARRERQEAQGECEARGRELAR and QTRDGPEPEAEREPVRDVGS. 2 coiled-coil regions span residues 263 to 396 and 427 to 518; these read QKVL…RRQT and KLKK…NAPL. Disordered regions lie at residues 472–497 and 509–550; these read DELDEAHNQARKLQRSLDEQTEQSEN and LRRQ…IQVA. Over residues 530–550 the composition is skewed to acidic residues; it reads EEAEDGTSDLDEDEDLQIQVA. Ser-537 bears the Phosphoserine mark.

The sequence is that of Coiled-coil domain-containing protein 102A (CCDC102A) from Homo sapiens (Human).